The sequence spans 362 residues: 3-dehydroquinate synthase (362 aa).

NAD(+) contacts are provided by residues aspartate 71–lysine 76, glycine 105–aspartate 109, threonine 129–threonine 130, lysine 142, lysine 151, and cysteine 169–threonine 172. Positions 184, 247, and 264 each coordinate Zn(2+).

The protein belongs to the sugar phosphate cyclases superfamily. Dehydroquinate synthase family. It depends on Co(2+) as a cofactor. Requires Zn(2+) as cofactor. The cofactor is NAD(+).

The protein resides in the cytoplasm. It catalyses the reaction 7-phospho-2-dehydro-3-deoxy-D-arabino-heptonate = 3-dehydroquinate + phosphate. The protein operates within metabolic intermediate biosynthesis; chorismate biosynthesis; chorismate from D-erythrose 4-phosphate and phosphoenolpyruvate: step 2/7. Functionally, catalyzes the conversion of 3-deoxy-D-arabino-heptulosonate 7-phosphate (DAHP) to dehydroquinate (DHQ). The sequence is that of 3-dehydroquinate synthase from Salmonella schwarzengrund (strain CVM19633).